Reading from the N-terminus, the 1167-residue chain is Tight junction protein 2 (1167 aa).

The region spanning 10-97 is the PDZ 1 domain; that stretch reads TVTLQKDSKR…IAAIVVKRPR (88 aa). Phosphoserine occurs at positions 107, 127, 130, 140, 145, 147, 173, 194, 205, and 239. The interval 129–195 is disordered; it reads RSGYSERSRH…SRERSRGRSL (67 aa). A disordered region spans residues 225-286; that stretch reads SYHEAYEPDY…KGQHDPDRPI (62 aa). The segment covering 242 to 262 has biased composition (basic and acidic residues); the sequence is YDRRAHPETRYERSRSREHLR. The 79-residue stretch at 287 to 365 folds into the PDZ 2 domain; it reads GVLLTKSKAN…KLQLVVLRDS (79 aa). A phosphoserine mark is found at Ser-305, Ser-378, Ser-380, Ser-386, Ser-395, Ser-404, Ser-410, and Ser-411. The disordered stretch occupies residues 381–485; the sequence is EVEDISEIES…LRPSPEDEAI (105 aa). Positions 395-426 are enriched in basic and acidic residues; sequence SPEERRQQYSDQDYHSSTEKLKERPSSREETS. Thr-435 carries the post-translational modification Phosphothreonine. Ser-479 carries the post-translational modification Phosphoserine. The PDZ 3 domain maps to 489 to 570; it reads NTKMVRFKKG…GETVTILAQS (82 aa). Phosphotyrosine is present on Tyr-554. The 66-residue stretch at 584-649 folds into the SH3 domain; it reads GDSFFIRSHF…PNKSRAEQMA (66 aa). The Guanylate kinase-like domain maps to 660–858; sequence GDRADFWRMR…WFGSLKDSIQ (199 aa). Ser-684 and Ser-884 each carry phosphoserine. Thr-887 bears the Phosphothreonine mark. Ser-895 and Ser-902 each carry phosphoserine. 2 disordered regions span residues 904–1055 and 1095–1167; these read FEDT…PRSV and YAVP…DTEL. Thr-907 and Thr-915 each carry phosphothreonine. Over residues 938–949 the composition is skewed to basic and acidic residues; that stretch reads VQHEENIRKSSP. Residues Ser-948, Ser-960, Ser-968, Ser-988, and Ser-1044 each carry the phosphoserine modification. Residues 976–990 show a composition bias toward basic and acidic residues; the sequence is EPPKARSQNREDSFD. Positions 1037 to 1049 are enriched in acidic residues; that stretch reads ESEEVGESTEEQE. Tyr-1095 carries the phosphotyrosine modification. A phosphoserine mark is found at Ser-1124 and Ser-1136. The segment at 1165 to 1167 is interaction with SCRIB; it reads TEL.

The protein belongs to the MAGUK family. In terms of assembly, homodimer. Interacts (via PDZ2 domain) with TJP1/ZO1 (via PDZ2 domain). Interacts with UBN1. Interacts with SCRIB. Interacts with OCLN. Interacts with SAFB in the nucleus. Interacts with USP53 (via the C-terminal region). Interacts with claudins, including CLDN1, CLDN2, CLDN3, CLDN5 and CLDN7. Interacts with CLDN18. Interacts (via N-terminus) with CTNNA1.

The protein localises to the cell junction. It localises to the adherens junction. The protein resides in the cell membrane. It is found in the nucleus. Its subcellular location is the tight junction. Functionally, plays a role in tight junctions and adherens junctions. Acts as a positive regulator of RANKL-induced osteoclast differentiation, potentially via mediating downstream transcriptional activity. The protein is Tight junction protein 2 of Mus musculus (Mouse).